The sequence spans 326 residues: Probable cell division protein WhiA (326 aa).

Positions 275-308 (SLEELGALADPPLTKDAIAGRIRRLLALADKRAR) form a DNA-binding region, H-T-H motif.

The protein belongs to the WhiA family.

Its function is as follows. Involved in cell division and chromosome segregation. The protein is Probable cell division protein WhiA of Salinispora tropica (strain ATCC BAA-916 / DSM 44818 / JCM 13857 / NBRC 105044 / CNB-440).